Here is a 659-residue protein sequence, read N- to C-terminus: Exoribonuclease 2 (659 aa).

In terms of domain architecture, RNB spans 189–532 (REDLTHLYFT…HRLIKQVLSN (344 aa)). The region spanning 576 to 658 (NVEFDGEIQD…ETRSVVGDVL (83 aa)) is the S1 motif domain.

This sequence belongs to the RNR ribonuclease family. RNase II subfamily.

Its subcellular location is the cytoplasm. The enzyme catalyses Exonucleolytic cleavage in the 3'- to 5'-direction to yield nucleoside 5'-phosphates.. Its function is as follows. Involved in mRNA degradation. Hydrolyzes single-stranded polyribonucleotides processively in the 3' to 5' direction. In Glaesserella parasuis serovar 5 (strain SH0165) (Haemophilus parasuis), this protein is Exoribonuclease 2.